Consider the following 185-residue polypeptide: Probable nicotinate-nucleotide adenylyltransferase (185 aa).

It belongs to the NadD family.

It catalyses the reaction nicotinate beta-D-ribonucleotide + ATP + H(+) = deamido-NAD(+) + diphosphate. The protein operates within cofactor biosynthesis; NAD(+) biosynthesis; deamido-NAD(+) from nicotinate D-ribonucleotide: step 1/1. Its function is as follows. Catalyzes the reversible adenylation of nicotinate mononucleotide (NaMN) to nicotinic acid adenine dinucleotide (NaAD). In Cereibacter sphaeroides (strain ATCC 17025 / ATH 2.4.3) (Rhodobacter sphaeroides), this protein is Probable nicotinate-nucleotide adenylyltransferase.